The primary structure comprises 313 residues: MAHSHSHTSSHLPEDNNARRLLYAFGVTAGFMLVEVVGGFLSGSLALLADAGHMLTDTAALLFALLAVQFSRRPPTIRHTFGWLRLTTLAAFVNAIALVVITILIVWEAIERFRTPRPVEGGMMMAIAVAGLLANILSFWLLHHGSEEKNLNVRAAALHVLGDLLGSVGAIIAALIIIWTGWTPADPILSILVSLLVLRSAWRLLKDSVNELLEGAPVSLDIAELKRRMCREIPEVRNVHHVHVWMVGEKPVMTLHVQVIPPHDHDALLDQIQHYLMDHYQIEHATIQMEYQPCHGPDCHLNEGVSGHSHHHH.

At M1 to R20 the chain is on the cytoplasmic side. The helical transmembrane segment at L21–L41 threads the bilayer. Residues S42–L47 lie on the Periplasmic side of the membrane. A helical transmembrane segment spans residues L48 to V68. Residues Q69–L89 are Cytoplasmic-facing. Residues A90–I110 traverse the membrane as a helical segment. The Periplasmic segment spans residues E111–G121. The chain crosses the membrane as a helical span at residues G122–L142. The Cytoplasmic segment spans residues H143–H159. Residues V160 to T180 form a helical membrane-spanning segment. G181 is a topological domain (periplasmic). A helical membrane pass occupies residues W182–W202. Residues R203–H313 lie on the Cytoplasmic side of the membrane.

This sequence belongs to the cation diffusion facilitator (CDF) transporter (TC 2.A.4) family. SLC30A subfamily.

It localises to the cell inner membrane. Functionally, involved in zinc efflux across the cytoplasmic membrane, thus reducing zinc accumulation in the cytoplasm and rendering bacteria more resistant to zinc. It may contribute to zinc homeostasis at low concentrations of zinc, whereas ZntA is required for growth at more toxic concentrations. The chain is Zinc transporter ZitB (zitB) from Escherichia coli (strain K12).